We begin with the raw amino-acid sequence, 400 residues long: Argininosuccinate synthase (400 aa).

ATP-binding positions include 10-18 (AYSGGVDTS) and alanine 38. L-citrulline is bound at residue tyrosine 89. Glycine 119 contacts ATP. Residues threonine 121, asparagine 125, and aspartate 126 each coordinate L-aspartate. Asparagine 125 is a binding site for L-citrulline. L-citrulline-binding residues include arginine 129, serine 177, serine 186, glutamate 262, and tyrosine 274.

It belongs to the argininosuccinate synthase family. Type 1 subfamily. Homotetramer.

It localises to the cytoplasm. It catalyses the reaction L-citrulline + L-aspartate + ATP = 2-(N(omega)-L-arginino)succinate + AMP + diphosphate + H(+). It participates in amino-acid biosynthesis; L-arginine biosynthesis; L-arginine from L-ornithine and carbamoyl phosphate: step 2/3. The sequence is that of Argininosuccinate synthase from Crocosphaera subtropica (strain ATCC 51142 / BH68) (Cyanothece sp. (strain ATCC 51142)).